We begin with the raw amino-acid sequence, 372 residues long: Coxsackievirus and adenovirus receptor homolog (372 aa).

The signal sequence occupies residues 1-22; that stretch reads MDMRTSFLCVTYVILLTGSACG. Ig-like C2-type domains are found at residues 23-140 and 130-234; these read LQIT…YLLT and PGIA…VTIT. Over 23–241 the chain is Extracellular; it reads LQITSTGQTS…TITQPPNTAG (219 aa). Intrachain disulfides connect C45/C124, C150/C227, and C166/C216. The N-linked (GlcNAc...) asparagine glycan is linked to N205. Residues 242 to 262 traverse the membrane as a helical segment; sequence IIAGVIICILLLLILLALILF. Residues 263-372 lie on the Cytoplasmic side of the membrane; it reads CCCRARHKKK…PAQNKDGSIV (110 aa). Positions 286–352 are disordered; it reads PPPKSRVSTA…PPSRMAGPNL (67 aa). Over residues 291–317 the composition is skewed to polar residues; it reads RVSTARSFTSVGSQRSSLGSMSPSNLH. Residues 318 to 336 show a composition bias toward basic and acidic residues; it reads EYSKPQYDKIPSEEYDRPP.

In terms of assembly, monomer. Probably homodimer formed by 2 molecules on adjacent cells.

It is found in the cell membrane. The protein localises to the basolateral cell membrane. The protein resides in the cell junction. Its subcellular location is the tight junction. It localises to the adherens junction. In terms of biological role, may function as a homophilic cell adhesion molecule and be essential for tight junction integrity. May also be involved in transepithelial migration of leukocytes through adhesive interactions with jaml. The interaction between both receptors may also mediate the activation of gamma-delta T-cells, a subpopulation of T-cells residing in epithelia and involved in tissue homeostasis and repair. The sequence is that of Coxsackievirus and adenovirus receptor homolog (cxadr) from Danio rerio (Zebrafish).